The chain runs to 322 residues: Malate dehydrogenase (322 aa).

NAD(+)-binding positions include 10 to 15 and Asp34; that span reads GSGQIG. Residues Arg83 and Arg89 each coordinate substrate. NAD(+) contacts are provided by residues Asn96 and 119-121; that span reads ITN. Asn121 and Arg152 together coordinate substrate. His176 functions as the Proton acceptor in the catalytic mechanism.

The protein belongs to the LDH/MDH superfamily. MDH type 3 family.

It carries out the reaction (S)-malate + NAD(+) = oxaloacetate + NADH + H(+). Catalyzes the reversible oxidation of malate to oxaloacetate. This Bradyrhizobium diazoefficiens (strain JCM 10833 / BCRC 13528 / IAM 13628 / NBRC 14792 / USDA 110) protein is Malate dehydrogenase.